A 133-amino-acid polypeptide reads, in one-letter code: Ribosome-binding factor A (133 aa).

This sequence belongs to the RbfA family. As to quaternary structure, monomer. Binds 30S ribosomal subunits, but not 50S ribosomal subunits or 70S ribosomes.

It is found in the cytoplasm. Its function is as follows. One of several proteins that assist in the late maturation steps of the functional core of the 30S ribosomal subunit. Associates with free 30S ribosomal subunits (but not with 30S subunits that are part of 70S ribosomes or polysomes). Required for efficient processing of 16S rRNA. May interact with the 5'-terminal helix region of 16S rRNA. The sequence is that of Ribosome-binding factor A from Acinetobacter baumannii (strain ACICU).